A 189-amino-acid chain; its full sequence is MSRLWLSGYRSYELNVFGDQDDKLKVIKFALTNYLTTQIEDGMDWLITGGQLGIEQWTAEVGLTLKKTYPELKVAMMLPYGEFGGRWNENNQAKLQTLLAQVDFHAPVSKQPYENPQQLKNYQEFMVTHTDAATLVYDPDNPGKPTYDYDLIRNFSDTHPYPLTLIDFDWLQESANEYAEKQNNGFNFE.

It belongs to the UPF0398 family.

The sequence is that of UPF0398 protein lp_1753 from Lactiplantibacillus plantarum (strain ATCC BAA-793 / NCIMB 8826 / WCFS1) (Lactobacillus plantarum).